The primary structure comprises 120 residues: MTTNSRLCPSSPSSSLIKHLTTSGGPSTSLTIMLSVIAIRILPAGMRNWIRQALGSLLFASFLLLSSFHYPITLTLVPVYHESLVKPTSASFGGIRLSQLTMIMERRATPTCQDPSLTEV.

2 helical membrane passes run 26-46 (PSTS…PAGM) and 57-77 (LLFA…LTLV).

The protein resides in the membrane. This is an uncharacterized protein from Saccharomyces cerevisiae (strain ATCC 204508 / S288c) (Baker's yeast).